A 366-amino-acid chain; its full sequence is Zinc finger protein ubi-d4 B (366 aa).

2 disordered regions span residues 41–94 (ASAP…DGSS) and 140–167 (DDLDDEDYEEDTPKRRKGKSKGKGIGGA). The span at 76–86 (PDPEQMLKKEG) shows a compositional bias: basic and acidic residues. The span at 140–149 (DDLDDEDYEE) shows a compositional bias: acidic residues. A C2H2-type zinc finger spans residues 183 to 206 (YACDICGKRYKNRPGLSYHYAHSH). The interval 211 to 243 (EGAGAEDKEDSQPPTPIMHRSEEQKSKKGPDGL) is disordered. The span at 229–240 (HRSEEQKSKKGP) shows a compositional bias: basic and acidic residues. 2 PHD-type zinc fingers span residues 247–307 (NNYC…CKCC) and 304–354 (CKCC…CLDL).

The protein belongs to the requiem/DPF family.

It localises to the cytoplasm. The protein resides in the nucleus. May be a transcription factor required for the apoptosis response following survival factor withdrawal from myeloid cells. Might also have a role in the development and maturation of lymphoid cells. The sequence is that of Zinc finger protein ubi-d4 B (req-b) from Xenopus laevis (African clawed frog).